The primary structure comprises 350 residues: MPVLHNRISNDELKAKMLAESEPRTTISFYKYFTIASPQQTRDALYQVFTALDVFGRVYLAYEGINAQISVPQSKVETFRQQLYTFDPALDGLRLNIALEDDGKSFWVLRMKVRDRIVADGIDDPSFDASNVGDYLKAADVNAMLDDPDAVFIDMRNHYEYEVGHFENALEIPADTFREQLPKAVEMLREHADKKIVMYCTGGIRCEKASAWMKHNGFNKVWHIEGGIIEYARRARAQGLPVRFIGKNFVFDERMGERISDEVIAHCHQCGAPCDSHTNCKNDGCHLLFIQCPQCASKFNGCCSEQCCEELALPEEEQRRRRAGRENGNKIFNKSRGRLNSKLSIPDPAE.

The Rhodanese domain maps to 146–240; the sequence is DDPDAVFIDM…YARRARAQGL (95 aa). The active-site Cysteine persulfide intermediate is C200. A compositionally biased stretch (basic and acidic residues) spans 319–328; it reads RRRRAGRENG. The segment at 319–350 is disordered; it reads RRRRAGRENGNKIFNKSRGRLNSKLSIPDPAE.

Belongs to the TrhO family.

The catalysed reaction is uridine(34) in tRNA + AH2 + O2 = 5-hydroxyuridine(34) in tRNA + A + H2O. In terms of biological role, catalyzes oxygen-dependent 5-hydroxyuridine (ho5U) modification at position 34 in tRNAs. The chain is tRNA uridine(34) hydroxylase from Salmonella paratyphi B (strain ATCC BAA-1250 / SPB7).